The sequence spans 457 residues: Nuclear distribution protein PAC1 (457 aa).

A coiled-coil region spans residues 73-106; the sequence is SSIVRLQRRIIELEKEIQELTDENENLRENGPSS. WD repeat units follow at residues 126-165, 169-211, 216-257, 260-299, 322-362, 382-419, and 423-457; these read SAGA…MPVA, AHMR…LQLI, GHEH…CLKS, PHTE…SFGT, SHRF…FVAH, GHSS…VVRS, and LHSG…ILMK.

This sequence belongs to the WD repeat LIS1/nudF family. As to quaternary structure, self-associates. Interacts with NDL1 and dynein.

The protein resides in the cytoplasm. The protein localises to the cytoskeleton. Its subcellular location is the spindle pole. Positively regulates the activity of the minus-end directed microtubule motor protein dynein. Plays a central role in positioning the mitotic spindle at the bud neck during cell division. Targets cytoplasmic dynein to microtubule plus ends, thereby promoting dynein-mediated microtubule sliding along the bud cortex and consequently the movement of the mitotic spindle to the bud neck. The sequence is that of Nuclear distribution protein PAC1 from Lachancea thermotolerans (strain ATCC 56472 / CBS 6340 / NRRL Y-8284) (Yeast).